Consider the following 154-residue polypeptide: Urease subunit alpha (154 aa).

Residues 38–154 (GGIDTHIHFI…ADEMDIQVAI (117 aa)) form the Urease domain. 3 residues coordinate Ni(2+): His-43, His-45, and Lys-126. The residue at position 126 (Lys-126) is an N6-carboxylysine. A substrate-binding site is contributed by His-128.

The protein belongs to the metallo-dependent hydrolases superfamily. Urease alpha subunit family. Heterotrimer of UreA (gamma), UreB (beta) and UreC (alpha) subunits. Three heterotrimers associate to form the active enzyme. The cofactor is Ni cation. Post-translationally, carboxylation allows a single lysine to coordinate two nickel ions.

The protein resides in the cytoplasm. It catalyses the reaction urea + 2 H2O + H(+) = hydrogencarbonate + 2 NH4(+). The protein operates within nitrogen metabolism; urea degradation; CO(2) and NH(3) from urea (urease route): step 1/1. The chain is Urease subunit alpha (ureC) from Photobacterium damselae subsp. damselae (Listonella damsela).